Consider the following 94-residue polypeptide: Alpha-conotoxin-like Vt20.1 (94 aa).

An N-terminal signal peptide occupies residues 1 to 25; sequence MPKLAVVLLVLLILPLSYFDAGGQA. Positions 26–44 are excised as a propeptide; it reads VQGDWRGNRLARDLQRGGR. Residues Glu-47 and Glu-49 each carry the 4-carboxyglutamate modification. Cystine bridges form between Cys-63-Cys-72, Cys-68-Cys-80, Cys-73-Cys-90, and Cys-78-Cys-92.

The protein belongs to the conotoxin D superfamily. As to quaternary structure, hetero-, homo- or pseudo-homodimer (identical sequence, different post-translational modifications). In terms of tissue distribution, expressed by the venom duct.

Its subcellular location is the secreted. Alpha-conotoxins act on postsynaptic membranes, they bind to the nicotinic acetylcholine receptors (nAChR) and thus inhibit them. Through its two C-terminal domains, this homodimeric protein would bind to two nAChR allosteric sites, located outside the nAChR C-loop of the principal binding face and at the adjacent binding interface in a clockwise direction. This toxin specifically blocks mammalian neuronal nAChR of the alpha-7/CHRNA7, alpha-3-beta-2/CHRNA3-CHRNB2 and alpha-4-beta-2/CHRNA4-CHRNB2 subtypes. In Conus planorbis (Planorbis cone), this protein is Alpha-conotoxin-like Vt20.1.